Reading from the N-terminus, the 39-residue chain is U1-ectatotoxin-Et1b subunit A (39 aa).

Cysteine 14 and cysteine 35 are oxidised to a cystine.

It belongs to the ectatomin family. Ectatomin-Et subfamily. In terms of assembly, heterodimer of subunits A and B; disulfide-linked. As to expression, expressed by the venom gland.

Its subcellular location is the secreted. It is found in the target cell membrane. This chain is U1-ectatotoxin-Et1b subunit A, found in Ectatomma tuberculatum (Selva ant).